We begin with the raw amino-acid sequence, 155 residues long: Large ribosomal subunit protein uL11 (155 aa).

Belongs to the universal ribosomal protein uL11 family. In terms of assembly, part of the ribosomal stalk of the 50S ribosomal subunit. Interacts with L10 and the large rRNA to form the base of the stalk. L10 forms an elongated spine to which L12 dimers bind in a sequential fashion forming a multimeric L10(L12)X complex. One or more lysine residues are methylated.

Functionally, forms part of the ribosomal stalk which helps the ribosome interact with GTP-bound translation factors. The chain is Large ribosomal subunit protein uL11 from Malacoplasma penetrans (strain HF-2) (Mycoplasma penetrans).